The chain runs to 255 residues: Geranylgeranylglyceryl phosphate synthase (255 aa).

Positions 34 and 64 each coordinate Mg(2+). Residues 182 to 188 (YLEAGSG), 213 to 214 (GG), and 235 to 236 (GN) contribute to the sn-glycerol 1-phosphate site.

This sequence belongs to the GGGP/HepGP synthase family. Group II subfamily. It depends on Mg(2+) as a cofactor.

It localises to the cytoplasm. It catalyses the reaction sn-glycerol 1-phosphate + (2E,6E,10E)-geranylgeranyl diphosphate = sn-3-O-(geranylgeranyl)glycerol 1-phosphate + diphosphate. Its pathway is membrane lipid metabolism; glycerophospholipid metabolism. Prenyltransferase that catalyzes the transfer of the geranylgeranyl moiety of geranylgeranyl diphosphate (GGPP) to the C3 hydroxyl of sn-glycerol-1-phosphate (G1P). This reaction is the first ether-bond-formation step in the biosynthesis of archaeal membrane lipids. This Saccharolobus solfataricus (strain ATCC 35092 / DSM 1617 / JCM 11322 / P2) (Sulfolobus solfataricus) protein is Geranylgeranylglyceryl phosphate synthase.